We begin with the raw amino-acid sequence, 365 residues long: Chorismate synthase (365 aa).

Arg48 is a binding site for NADP(+). Residues 125–127 (RGS), Gly286, 301–305 (KPTPS), and Arg328 contribute to the FMN site.

It belongs to the chorismate synthase family. It depends on FMNH2 as a cofactor.

It carries out the reaction 5-O-(1-carboxyvinyl)-3-phosphoshikimate = chorismate + phosphate. Its pathway is metabolic intermediate biosynthesis; chorismate biosynthesis; chorismate from D-erythrose 4-phosphate and phosphoenolpyruvate: step 7/7. In terms of biological role, catalyzes the anti-1,4-elimination of the C-3 phosphate and the C-6 proR hydrogen from 5-enolpyruvylshikimate-3-phosphate (EPSP) to yield chorismate, which is the branch point compound that serves as the starting substrate for the three terminal pathways of aromatic amino acid biosynthesis. This reaction introduces a second double bond into the aromatic ring system. The polypeptide is Chorismate synthase (Methanosphaera stadtmanae (strain ATCC 43021 / DSM 3091 / JCM 11832 / MCB-3)).